The sequence spans 88 residues: Small ribosomal subunit protein bS20 (88 aa).

The disordered stretch occupies residues 1–27 (MANSKTAKKRAIQSEKRRQHNASRRSM).

This sequence belongs to the bacterial ribosomal protein bS20 family.

In terms of biological role, binds directly to 16S ribosomal RNA. In Shewanella amazonensis (strain ATCC BAA-1098 / SB2B), this protein is Small ribosomal subunit protein bS20.